A 319-amino-acid chain; its full sequence is Acetyl-coenzyme A carboxylase carboxyl transferase subunit alpha (319 aa).

Positions 35-296 (DLEKEIKQLE…KQRLLEQLKE (262 aa)) constitute a CoA carboxyltransferase C-terminal domain.

The protein belongs to the AccA family. Acetyl-CoA carboxylase is a heterohexamer composed of biotin carboxyl carrier protein (AccB), biotin carboxylase (AccC) and two subunits each of ACCase subunit alpha (AccA) and ACCase subunit beta (AccD).

The protein localises to the cytoplasm. The catalysed reaction is N(6)-carboxybiotinyl-L-lysyl-[protein] + acetyl-CoA = N(6)-biotinyl-L-lysyl-[protein] + malonyl-CoA. It functions in the pathway lipid metabolism; malonyl-CoA biosynthesis; malonyl-CoA from acetyl-CoA: step 1/1. Component of the acetyl coenzyme A carboxylase (ACC) complex. First, biotin carboxylase catalyzes the carboxylation of biotin on its carrier protein (BCCP) and then the CO(2) group is transferred by the carboxyltransferase to acetyl-CoA to form malonyl-CoA. This is Acetyl-coenzyme A carboxylase carboxyl transferase subunit alpha from Aliivibrio fischeri (strain MJ11) (Vibrio fischeri).